We begin with the raw amino-acid sequence, 376 residues long: Putative endoglucanase type K (376 aa).

Residues 1–18 (MRSYTLLALAGPLAVSAA) form the signal peptide. The tract at residues 19-308 (SGSGHSTRYW…ATKPAQPVNK (290 aa)) is catalytic. The Nucleophile role is filled by D29. The Proton donor role is filled by D140. Positions 229 to 332 (AFKGDTSASK…SCPAKTDATA (104 aa)) are disordered. Composition is skewed to low complexity over residues 235–258 (SASKPQPSSSAKKTTSAAAAAQPQ) and 291–306 (KPVATKPAATKPAQPV). Residues 309–338 (PKTTQKVRGTKTRGSCPAKTDATAKASVVP) are linker. Residues 335–374 (SVVPAYYQCGGSKSAYPNGNLACATGSKCVKQNEYYSQCV) enclose the CBM1 domain.

This sequence belongs to the glycosyl hydrolase 45 (cellulase K) family.

It carries out the reaction Endohydrolysis of (1-&gt;4)-beta-D-glucosidic linkages in cellulose, lichenin and cereal beta-D-glucans.. The chain is Putative endoglucanase type K from Fusarium oxysporum (Fusarium vascular wilt).